A 549-amino-acid polypeptide reads, in one-letter code: Zinc finger protein 382 (549 aa).

Residues 1–105 (MNCHSVPLQG…DKPPTSIVII (105 aa)) form a mediates interaction with TRIM28 region. 2 represses transcription regions span residues 10–51 (GPVS…FISV) and 75–210 (MFPS…PEQR). The KRAB domain maps to 12–83 (VSFKDVTVDF…RMFPSQSYLE (72 aa)). C2H2-type zinc fingers lie at residues 211–233 (FECDECDSSFLMTEVAFPHDRAH), 295–317 (FQCPYCGNSFRRKSYLIEHQRIH), 323–345 (YICSQCGKAFRQKTALTLHEKTH), 351–373 (YLCVDCGKSFRQKATLTRHHKTH), 379–401 (YECTQCGSAFGKKSYLIDHQRTH), 407–429 (YQCAECGKAFIQKTTLTVHQRTH), 435–457 (YMCSECGKSFCQKTTLTLHQRIH), 463–485 (YVCSDCGKSFRQKAILTVHYRIH), 491–513 (NGCPQCGKAFSRKSNLIRHQKTH), and 519–541 (YECHECGKFFSCKSNLVAHQKTH). The interval 295–549 (FQCPYCGNSF…THKAETVRFQ (255 aa)) is required for transcriptional repression activity; probably mediates sequence-specific DNA-binding.

The protein belongs to the krueppel C2H2-type zinc-finger protein family. Interacts with TRIM28; enhances the transcriptional repressor activity. As to expression, ubiquitously expressed with higher expression in lung, kidney and testis.

It localises to the nucleus. Its function is as follows. Functions as a sequence-specific transcriptional repressor. The sequence is that of Zinc finger protein 382 (Znf382) from Rattus norvegicus (Rat).